The chain runs to 179 residues: Adenine phosphoribosyltransferase (179 aa).

The protein belongs to the purine/pyrimidine phosphoribosyltransferase family. As to quaternary structure, homodimer.

The protein localises to the cytoplasm. It catalyses the reaction AMP + diphosphate = 5-phospho-alpha-D-ribose 1-diphosphate + adenine. It functions in the pathway purine metabolism; AMP biosynthesis via salvage pathway; AMP from adenine: step 1/1. In terms of biological role, catalyzes a salvage reaction resulting in the formation of AMP, that is energically less costly than de novo synthesis. This Helicobacter pylori (strain G27) protein is Adenine phosphoribosyltransferase.